The chain runs to 609 residues: tRNA 5-methylaminomethyl-2-thiouridine biosynthesis bifunctional protein MnmC (609 aa).

The tract at residues 1–229 is tRNA (mnm(5)s(2)U34)-methyltransferase; that stretch reads MVELAAATCL…TRNTLPARAM (229 aa). An FAD-dependent cmnm(5)s(2)U34 oxidoreductase region spans residues 237-609; it reads IGAGLAGASV…SPELPVSCAP (373 aa).

This sequence in the N-terminal section; belongs to the methyltransferase superfamily. tRNA (mnm(5)s(2)U34)-methyltransferase family. In the C-terminal section; belongs to the DAO family. FAD is required as a cofactor.

It is found in the cytoplasm. It carries out the reaction 5-aminomethyl-2-thiouridine(34) in tRNA + S-adenosyl-L-methionine = 5-methylaminomethyl-2-thiouridine(34) in tRNA + S-adenosyl-L-homocysteine + H(+). In terms of biological role, catalyzes the last two steps in the biosynthesis of 5-methylaminomethyl-2-thiouridine (mnm(5)s(2)U) at the wobble position (U34) in tRNA. Catalyzes the FAD-dependent demodification of cmnm(5)s(2)U34 to nm(5)s(2)U34, followed by the transfer of a methyl group from S-adenosyl-L-methionine to nm(5)s(2)U34, to form mnm(5)s(2)U34. This Albidiferax ferrireducens (strain ATCC BAA-621 / DSM 15236 / T118) (Rhodoferax ferrireducens) protein is tRNA 5-methylaminomethyl-2-thiouridine biosynthesis bifunctional protein MnmC (mnmC).